The following is a 630-amino-acid chain: Transcription factor MYC1 (630 aa).

Disordered stretches follow at residues phenylalanine 356–glutamate 398 and valine 430–arginine 463. The span at lysine 440–alanine 449 shows a compositional bias: basic residues. Residues asparagine 450–arginine 463 show a composition bias toward basic and acidic residues. A basic motif; degenerate region spans residues glutamate 453–arginine 466. Residues glutamate 453–leucine 502 enclose the bHLH domain. Residues glutamate 467–leucine 502 are helix-loop-helix motif.

Highly expressed in trichomes and at lower levels in leaves and flowers. Expressed at low levels in roots, stems, leaves, flowers and fruits.

It is found in the nucleus. Functionally, transcriptional activator that binds to the G-box motif (5'-AACGTG-3') found in a number of promoters of jasmonate-induced genes. Transcription activator involved in the transcriptional regulation of terpene biosynthesis in glandular trichomes. Binds to the promoter of the linalool synthase TPS5 and promotes TPS5 gene transactivation. Acts synergistically with EOT1 in the transactivation of TPS5. Involved in type VI glandular trichome development. Involved in the activation of terpene synthases required for volatile mono- and sesquiterpenes synthesis by the glandular cells of type VI trichomes. The polypeptide is Transcription factor MYC1 (Solanum lycopersicum (Tomato)).